Reading from the N-terminus, the 79-residue chain is DNA-directed RNA polymerase subunit omega (79 aa).

Belongs to the RNA polymerase subunit omega family. As to quaternary structure, in cyanobacteria the RNAP catalytic core is composed of 2 alpha, 1 beta, 1 beta', 1 gamma and 1 omega subunit. When a sigma factor is associated with the core the holoenzyme is formed, which can initiate transcription.

The catalysed reaction is RNA(n) + a ribonucleoside 5'-triphosphate = RNA(n+1) + diphosphate. In terms of biological role, promotes RNA polymerase assembly. Latches the N- and C-terminal regions of the beta' subunit thereby facilitating its interaction with the beta and alpha subunits. This chain is DNA-directed RNA polymerase subunit omega, found in Synechococcus sp. (strain JA-3-3Ab) (Cyanobacteria bacterium Yellowstone A-Prime).